A 485-amino-acid chain; its full sequence is Glycogen synthase (485 aa).

Residue Lys-15 coordinates ADP-alpha-D-glucose.

Belongs to the glycosyltransferase 1 family. Bacterial/plant glycogen synthase subfamily.

It catalyses the reaction [(1-&gt;4)-alpha-D-glucosyl](n) + ADP-alpha-D-glucose = [(1-&gt;4)-alpha-D-glucosyl](n+1) + ADP + H(+). Its pathway is glycan biosynthesis; glycogen biosynthesis. Its function is as follows. Synthesizes alpha-1,4-glucan chains using ADP-glucose. The polypeptide is Glycogen synthase (Francisella philomiragia subsp. philomiragia (strain ATCC 25017 / CCUG 19701 / FSC 153 / O#319-036)).